The chain runs to 321 residues: uncharacterized protein (321 aa).

The segment at 1–80 is disordered; sequence MQGGQEVGRE…GELSGGWGEF (80 aa).

This is an uncharacterized protein from Mus musculus (Mouse).